The following is a 184-amino-acid chain: Crossover junction endodeoxyribonuclease RuvC (184 aa).

Residues Asp-7, Glu-68, and Asp-141 contribute to the active site. 3 residues coordinate Mg(2+): Asp-7, Glu-68, and Asp-141.

Belongs to the RuvC family. As to quaternary structure, homodimer which binds Holliday junction (HJ) DNA. The HJ becomes 2-fold symmetrical on binding to RuvC with unstacked arms; it has a different conformation from HJ DNA in complex with RuvA. In the full resolvosome a probable DNA-RuvA(4)-RuvB(12)-RuvC(2) complex forms which resolves the HJ. It depends on Mg(2+) as a cofactor.

The protein resides in the cytoplasm. The enzyme catalyses Endonucleolytic cleavage at a junction such as a reciprocal single-stranded crossover between two homologous DNA duplexes (Holliday junction).. Its function is as follows. The RuvA-RuvB-RuvC complex processes Holliday junction (HJ) DNA during genetic recombination and DNA repair. Endonuclease that resolves HJ intermediates. Cleaves cruciform DNA by making single-stranded nicks across the HJ at symmetrical positions within the homologous arms, yielding a 5'-phosphate and a 3'-hydroxyl group; requires a central core of homology in the junction. The consensus cleavage sequence is 5'-(A/T)TT(C/G)-3'. Cleavage occurs on the 3'-side of the TT dinucleotide at the point of strand exchange. HJ branch migration catalyzed by RuvA-RuvB allows RuvC to scan DNA until it finds its consensus sequence, where it cleaves and resolves the cruciform DNA. This Mycobacterium ulcerans (strain Agy99) protein is Crossover junction endodeoxyribonuclease RuvC.